The sequence spans 422 residues: Tyrosine--tRNA ligase (422 aa).

Tyrosine 35 provides a ligand contact to L-tyrosine. A 'HIGH' region motif is present at residues 40–49 (PTAASLHVGH). Tyrosine 169 and glutamine 173 together coordinate L-tyrosine. The short motif at 229-233 (KFGKT) is the 'KMSKS' region element. Residue lysine 232 coordinates ATP. The S4 RNA-binding domain occupies 352–418 (VRLAQLFADT…GKKSLASVAV (67 aa)).

This sequence belongs to the class-I aminoacyl-tRNA synthetase family. TyrS type 1 subfamily. As to quaternary structure, homodimer.

It is found in the cytoplasm. The catalysed reaction is tRNA(Tyr) + L-tyrosine + ATP = L-tyrosyl-tRNA(Tyr) + AMP + diphosphate + H(+). Its function is as follows. Catalyzes the attachment of tyrosine to tRNA(Tyr) in a two-step reaction: tyrosine is first activated by ATP to form Tyr-AMP and then transferred to the acceptor end of tRNA(Tyr). The protein is Tyrosine--tRNA ligase of Kineococcus radiotolerans (strain ATCC BAA-149 / DSM 14245 / SRS30216).